The primary structure comprises 195 residues: PAP fimbrial minor pilin protein (195 aa).

The first 22 residues, 1-22, serve as a signal peptide directing secretion; it reads MRLRFSVPLFFFGCVFVHGVFA. Cysteines 58 and 97 form a disulfide.

Belongs to the fimbrial protein family.

The protein localises to the secreted. Its subcellular location is the fimbrium. Its function is as follows. Fimbriae (also called pili), polar filaments radiating from the surface of the bacterium to a length of 0.5-1.5 micrometers and numbering 100-300 per cell, enable bacteria to colonize the epithelium of specific host organs. In terms of biological role, papH seems to anchor the pilus to the bacterial cell. In addition the stoichiometric relationship between PapH and PapA determines the pilus length. In Escherichia coli, this protein is PAP fimbrial minor pilin protein (papH).